The sequence spans 116 residues: Nucleoid-associated protein MLBr02330 (116 aa).

The segment at 96–116 (LTSAMRPTAPPPTPPTYMAGT) is disordered.

It belongs to the YbaB/EbfC family. As to quaternary structure, homodimer.

It localises to the cytoplasm. It is found in the nucleoid. Its function is as follows. Binds to DNA and alters its conformation. May be involved in regulation of gene expression, nucleoid organization and DNA protection. This chain is Nucleoid-associated protein MLBr02330, found in Mycobacterium leprae (strain Br4923).